The following is a 317-amino-acid chain: Probable GTP 3',8-cyclase (317 aa).

A Radical SAM core domain is found at 4–223 (RYGRPLEDLR…KSEIREKHFR (220 aa)). GTP is bound at residue arginine 13. Positions 20, 24, and 27 each coordinate [4Fe-4S] cluster. Residue lysine 61 coordinates GTP. Glycine 65 provides a ligand contact to S-adenosyl-L-methionine. Threonine 91 lines the GTP pocket. Serine 115 contacts S-adenosyl-L-methionine. Lysine 152 is a GTP binding site. [4Fe-4S] cluster is bound by residues cysteine 246 and cysteine 249. Position 251-253 (251-253 (RVR)) interacts with GTP. Residue cysteine 263 coordinates [4Fe-4S] cluster.

This sequence belongs to the radical SAM superfamily. MoaA family. Requires [4Fe-4S] cluster as cofactor.

It catalyses the reaction GTP + AH2 + S-adenosyl-L-methionine = (8S)-3',8-cyclo-7,8-dihydroguanosine 5'-triphosphate + 5'-deoxyadenosine + L-methionine + A + H(+). Its pathway is cofactor biosynthesis; molybdopterin biosynthesis. Catalyzes the cyclization of GTP to (8S)-3',8-cyclo-7,8-dihydroguanosine 5'-triphosphate. The chain is Probable GTP 3',8-cyclase from Metallosphaera sedula (strain ATCC 51363 / DSM 5348 / JCM 9185 / NBRC 15509 / TH2).